The chain runs to 316 residues: 4-hydroxy-3-methylbut-2-enyl diphosphate reductase (316 aa).

Cys12 contacts [4Fe-4S] cluster. Residues His43 and His81 each contribute to the (2E)-4-hydroxy-3-methylbut-2-enyl diphosphate site. 2 residues coordinate dimethylallyl diphosphate: His43 and His81. Residues His43 and His81 each coordinate isopentenyl diphosphate. Residue Cys103 participates in [4Fe-4S] cluster binding. His131 is a (2E)-4-hydroxy-3-methylbut-2-enyl diphosphate binding site. Residue His131 participates in dimethylallyl diphosphate binding. Residue His131 coordinates isopentenyl diphosphate. Catalysis depends on Glu133, which acts as the Proton donor. Thr170 is a binding site for (2E)-4-hydroxy-3-methylbut-2-enyl diphosphate. Cys198 contributes to the [4Fe-4S] cluster binding site. The (2E)-4-hydroxy-3-methylbut-2-enyl diphosphate site is built by Ser226, Asn228, and Ser271. 3 residues coordinate dimethylallyl diphosphate: Ser226, Asn228, and Ser271. Residues Ser226, Asn228, and Ser271 each coordinate isopentenyl diphosphate.

Belongs to the IspH family. It depends on [4Fe-4S] cluster as a cofactor.

The enzyme catalyses isopentenyl diphosphate + 2 oxidized [2Fe-2S]-[ferredoxin] + H2O = (2E)-4-hydroxy-3-methylbut-2-enyl diphosphate + 2 reduced [2Fe-2S]-[ferredoxin] + 2 H(+). It carries out the reaction dimethylallyl diphosphate + 2 oxidized [2Fe-2S]-[ferredoxin] + H2O = (2E)-4-hydroxy-3-methylbut-2-enyl diphosphate + 2 reduced [2Fe-2S]-[ferredoxin] + 2 H(+). It participates in isoprenoid biosynthesis; dimethylallyl diphosphate biosynthesis; dimethylallyl diphosphate from (2E)-4-hydroxy-3-methylbutenyl diphosphate: step 1/1. The protein operates within isoprenoid biosynthesis; isopentenyl diphosphate biosynthesis via DXP pathway; isopentenyl diphosphate from 1-deoxy-D-xylulose 5-phosphate: step 6/6. Functionally, catalyzes the conversion of 1-hydroxy-2-methyl-2-(E)-butenyl 4-diphosphate (HMBPP) into a mixture of isopentenyl diphosphate (IPP) and dimethylallyl diphosphate (DMAPP). Acts in the terminal step of the DOXP/MEP pathway for isoprenoid precursor biosynthesis. The sequence is that of 4-hydroxy-3-methylbut-2-enyl diphosphate reductase from Bacillus anthracis (strain A0248).